We begin with the raw amino-acid sequence, 215 residues long: Ankyrin repeat domain-containing protein 49 (215 aa).

ANK repeat units follow at residues 81–110 (DGYT…NPNA) and 114–143 (LGWT…DVNA).

As to quaternary structure, interacts with Bdbt; interaction promotes the stability of both complex members.

The protein resides in the cytoplasm. The protein localises to the cytosol. Its subcellular location is the cell membrane. In terms of biological role, required for regulating the establishment of planar cell polarity in the wing. Forms a complex with Bdbt which likely functions in the regulation of planar polarity by promoting the activity of Dco during planar polarity establishment. Within the complex, probably functions to stabilize Bdbt, while Bdbt directly promotes Dco activity in regulating phosphorylation of core proteins such as dsh, and asymmetric localization. The protein is Ankyrin repeat domain-containing protein 49 of Drosophila melanogaster (Fruit fly).